The sequence spans 188 residues: Protein GrpE (188 aa).

Polar residues predominate over residues Met1–Val10. The segment at Met1 to Met35 is disordered. Positions Ala19–Ala32 are enriched in low complexity.

It belongs to the GrpE family. As to quaternary structure, homodimer.

The protein localises to the cytoplasm. Its function is as follows. Participates actively in the response to hyperosmotic and heat shock by preventing the aggregation of stress-denatured proteins, in association with DnaK and GrpE. It is the nucleotide exchange factor for DnaK and may function as a thermosensor. Unfolded proteins bind initially to DnaJ; upon interaction with the DnaJ-bound protein, DnaK hydrolyzes its bound ATP, resulting in the formation of a stable complex. GrpE releases ADP from DnaK; ATP binding to DnaK triggers the release of the substrate protein, thus completing the reaction cycle. Several rounds of ATP-dependent interactions between DnaJ, DnaK and GrpE are required for fully efficient folding. This chain is Protein GrpE, found in Azoarcus sp. (strain BH72).